A 162-amino-acid chain; its full sequence is Ribosome maturation factor RimP (162 aa).

Belongs to the RimP family.

The protein resides in the cytoplasm. Its function is as follows. Required for maturation of 30S ribosomal subunits. This is Ribosome maturation factor RimP from Cupriavidus metallidurans (strain ATCC 43123 / DSM 2839 / NBRC 102507 / CH34) (Ralstonia metallidurans).